We begin with the raw amino-acid sequence, 140 residues long: ATP synthase epsilon chain (140 aa).

This sequence belongs to the ATPase epsilon chain family. As to quaternary structure, F-type ATPases have 2 components, CF(1) - the catalytic core - and CF(0) - the membrane proton channel. CF(1) has five subunits: alpha(3), beta(3), gamma(1), delta(1), epsilon(1). CF(0) has three main subunits: a, b and c.

The protein localises to the cell membrane. Functionally, produces ATP from ADP in the presence of a proton gradient across the membrane. The polypeptide is ATP synthase epsilon chain (Dehalococcoides mccartyi (strain ATCC BAA-2100 / JCM 16839 / KCTC 5957 / BAV1)).